The following is a 603-amino-acid chain: Multicopper oxidase MCE (603 aa).

Residues 1–21 form the signal peptide; that stretch reads MNTFICSALICLSWLPGFIQA. In terms of domain architecture, Plastocyanin-like 1 spans 30-144; it reads ITYAKGAPDG…YGALWIRPKE (115 aa). A glycan (N-linked (GlcNAc...) asparagine) is linked at Asn75. 4 residues coordinate Cu cation: His79, His81, His123, and His125. N-linked (GlcNAc...) asparagine glycans are attached at residues Asn155, Asn180, Asn235, Asn256, Asn272, Asn275, Asn388, Asn394, Asn413, and Asn455. Positions 173 to 353 constitute a Plastocyanin-like 2 domain; that stretch reads LIVSDWSNFT…TPGDYTIRLP (181 aa). Residues 450 to 581 enclose the Plastocyanin-like 3 domain; it reads LLYNPNSTAA…GGMAGVIMDG (132 aa). His495 contacts Cu cation. Residues Asn512 and Asn595 are each glycosylated (N-linked (GlcNAc...) asparagine).

This sequence belongs to the multicopper oxidase family.

It catalyses the reaction 4 monapinone A + O2 = 2 dinapinone A + 2 H2O. It carries out the reaction 4 monapinone E + O2 = 2 dinapinone E + 2 H2O. It functions in the pathway secondary metabolite biosynthesis. In terms of biological role, multicopper oxidase; part of the gene cluster that mediates the biosynthesis of dinapinones DPA1 (or (M)-DPA) and DPA2 (or (P)-DPA), biaryl dihydronaphthopyranones that act in concert as inhibitors of triacylglycerol accumulation in mammalian cells. The first step in the pathway corresponds to the biosynthesis of dihydroxy-decanoyl-CoA by the fungal type I fatty acid synthase (formed by ORF4 and ORF5). The cluster-specific polyketide synthase (ORF7) then accepts and extends dihydroxy-decanoyl-CoA with 6 malonyl-CoA moieties and cyclizes the molecule to produce a putative polyhydroxynaphthopyranone intermediate, which is further methylated by the cluster-specific methyltransferase (ORF1) at 7-OH to produce monapinone A (MPA). MCE catalyzes the regioselective biaryl coupling of monapinone A (MPA) at the 8,8'-positions to afford dimeric atropisomers DPA1 and DPA2 in a ratio of approximately 1:2.5. Monapinone E (MPE) also appears to be a substrate for MCE and provides the atropisomers dinapinones DPE1 (or (M)-DPE) and DPE2 (or (P)-DPE). In Talaromyces pinophilus (Penicillium pinophilum), this protein is Multicopper oxidase MCE.